Consider the following 307-residue polypeptide: tRNA-cytidine(32) 2-sulfurtransferase (307 aa).

A PP-loop motif motif is present at residues 44–49 (SGGKDS). Residues cysteine 119, cysteine 122, and cysteine 210 each contribute to the [4Fe-4S] cluster site.

It belongs to the TtcA family. As to quaternary structure, homodimer. Mg(2+) is required as a cofactor. Requires [4Fe-4S] cluster as cofactor.

Its subcellular location is the cytoplasm. It carries out the reaction cytidine(32) in tRNA + S-sulfanyl-L-cysteinyl-[cysteine desulfurase] + AH2 + ATP = 2-thiocytidine(32) in tRNA + L-cysteinyl-[cysteine desulfurase] + A + AMP + diphosphate + H(+). It participates in tRNA modification. In terms of biological role, catalyzes the ATP-dependent 2-thiolation of cytidine in position 32 of tRNA, to form 2-thiocytidine (s(2)C32). The sulfur atoms are provided by the cysteine/cysteine desulfurase (IscS) system. In Aliivibrio salmonicida (strain LFI1238) (Vibrio salmonicida (strain LFI1238)), this protein is tRNA-cytidine(32) 2-sulfurtransferase.